A 203-amino-acid chain; its full sequence is Glycerol-3-phosphate acyltransferase (203 aa).

6 consecutive transmembrane segments (helical) span residues 3 to 23 (ILLA…VVVS), 51 to 71 (KAAI…VWLV), 74 to 94 (FGIG…LGHL), 116 to 136 (AVHP…AFFF), 140 to 160 (SLAA…LFGT), and 164 to 178 (PVAW…LLIW).

The protein belongs to the PlsY family. Probably interacts with PlsX.

The protein resides in the cell inner membrane. The enzyme catalyses an acyl phosphate + sn-glycerol 3-phosphate = a 1-acyl-sn-glycero-3-phosphate + phosphate. The protein operates within lipid metabolism; phospholipid metabolism. In terms of biological role, catalyzes the transfer of an acyl group from acyl-phosphate (acyl-PO(4)) to glycerol-3-phosphate (G3P) to form lysophosphatidic acid (LPA). This enzyme utilizes acyl-phosphate as fatty acyl donor, but not acyl-CoA or acyl-ACP. This is Glycerol-3-phosphate acyltransferase from Burkholderia pseudomallei (strain K96243).